Here is a 138-residue protein sequence, read N- to C-terminus: ATP synthase epsilon chain (138 aa).

It belongs to the ATPase epsilon chain family. As to quaternary structure, F-type ATPases have 2 components, CF(1) - the catalytic core - and CF(0) - the membrane proton channel. CF(1) has five subunits: alpha(3), beta(3), gamma(1), delta(1), epsilon(1). CF(0) has three main subunits: a, b and c.

It localises to the cell inner membrane. Its function is as follows. Produces ATP from ADP in the presence of a proton gradient across the membrane. The protein is ATP synthase epsilon chain of Polaromonas naphthalenivorans (strain CJ2).